The sequence spans 122 residues: Large ribosomal subunit protein uL14 (122 aa).

It belongs to the universal ribosomal protein uL14 family. Part of the 50S ribosomal subunit. Forms a cluster with proteins L3 and L19. In the 70S ribosome, L14 and L19 interact and together make contacts with the 16S rRNA in bridges B5 and B8.

In terms of biological role, binds to 23S rRNA. Forms part of two intersubunit bridges in the 70S ribosome. The chain is Large ribosomal subunit protein uL14 from Chlorobium chlorochromatii (strain CaD3).